Here is a 1186-residue protein sequence, read N- to C-terminus: Probable inactive serine/threonine-protein kinase DDB_G0293184 (1186 aa).

Over residues 1–12 (MEQEDQQYEEDS) the composition is skewed to acidic residues. 2 disordered regions span residues 1 to 55 (MEQE…NNDS) and 99 to 122 (MEQQ…NTNF). 2 stretches are compositionally biased toward low complexity: residues 34-48 (TTTE…TTPT) and 99-110 (MEQQQQQQHLQP). The Protein kinase domain maps to 173 to 437 (YESPPTLGKY…VHDLLRHPWL (265 aa)). Residues 179 to 187 (LGKYDKVIL) and lysine 205 contribute to the ATP site. Disordered stretches follow at residues 447–468 (SSSS…GNVN) and 530–551 (YNNY…NECG). The segment covering 453-468 (QAHPTVQSNNLNGNVN) has biased composition (polar residues). Low complexity predominate over residues 530 to 545 (YNNYNNNNNNNNNTND). The stretch at 631–659 (LKRTNQMANDLGRKYEILQSNIKRLEDYL) forms a coiled coil. Over residues 766-784 (NNLDPSNNNESVNLSTSPG) the composition is skewed to polar residues. Disordered regions lie at residues 766–911 (NNLD…NGNN) and 959–988 (ENKK…GDVS). The segment covering 785-836 (SLVNSNSNPSISNSLNNNNNNNNNNNNNNNGNPNVIITTNNNCNSNSNGNNI) has biased composition (low complexity). Residues 847 to 896 (KEVKEGKEIKEIKEPKEKDKDKEKDKDKEKDKDKEKDKDKEKEKDKDKEN) show a composition bias toward basic and acidic residues. Residues 875 to 909 (EKDKDKEKDKDKEKEKDKDKENNNNNNSNNNNNNG) are a coiled coil. Residues 897 to 911 (NNNNNSNNNNNNGNN) show a composition bias toward low complexity. A compositionally biased stretch (polar residues) spans 969 to 978 (LDSTNKQSPG). In terms of domain architecture, Rho-GAP spans 1004-1186 (VRLDDLMTRE…LSFPKFNLSV (183 aa)).

Belongs to the protein kinase superfamily. STE Ser/Thr protein kinase family.

In Dictyostelium discoideum (Social amoeba), this protein is Probable inactive serine/threonine-protein kinase DDB_G0293184.